Here is a 105-residue protein sequence, read N- to C-terminus: Met repressor (105 aa).

This sequence belongs to the MetJ family. Homodimer.

Its subcellular location is the cytoplasm. In terms of biological role, this regulatory protein, when combined with SAM (S-adenosylmethionine) represses the expression of the methionine regulon and of enzymes involved in SAM synthesis. This Haemophilus influenzae (strain PittEE) protein is Met repressor.